The chain runs to 371 residues: Cytochrome b (371 aa).

4 helical membrane-spanning segments follow: residues 25-45 (FGSMLLTCLALQVLTGFFLAV), 69-90 (WMMQNLHAIGASMFFICIYIHI), 105-125 (WMSGITLLITLMATAFFGYVL), and 170-190 (FFALHFILPFAIISLSSLHII). Heme b-binding residues include H75 and H89. Positions 174 and 188 each coordinate heme b. An a ubiquinone-binding site is contributed by H193. 4 helical membrane-spanning segments follow: residues 218–238 (HKDLLLLTLMMLSLLIIVSFF), 280–300 (LGGALALVMSIMILFTIPFTH), 312–332 (FSQLMFWTLVSTFITITWAAT), and 339–358 (FIVISQVTSTLYFTFFLLIP).

It belongs to the cytochrome b family. As to quaternary structure, the cytochrome bc1 complex contains 3 respiratory subunits (MT-CYB, CYC1 and UQCRFS1), 2 core proteins (UQCRC1 and UQCRC2) and probably 6 low-molecular weight proteins. Requires heme b as cofactor.

It localises to the mitochondrion inner membrane. Its function is as follows. Component of the ubiquinol-cytochrome c reductase complex (complex III or cytochrome b-c1 complex) that is part of the mitochondrial respiratory chain. The b-c1 complex mediates electron transfer from ubiquinol to cytochrome c. Contributes to the generation of a proton gradient across the mitochondrial membrane that is then used for ATP synthesis. This Leiopython albertisii (Northern white-lipped python) protein is Cytochrome b (MT-CYB).